The chain runs to 350 residues: Farnesyl pyrophosphate synthase (350 aa).

The isopentenyl diphosphate site is built by K55, R58, and Q94. Residues D101 and D105 each contribute to the Mg(2+) site. R110 lines the dimethylallyl diphosphate pocket. R111 lines the isopentenyl diphosphate pocket. Dimethylallyl diphosphate-binding residues include K198, T199, Q237, K254, and K263.

This sequence belongs to the FPP/GGPP synthase family. Mg(2+) serves as cofactor.

The protein resides in the cytoplasm. It carries out the reaction isopentenyl diphosphate + dimethylallyl diphosphate = (2E)-geranyl diphosphate + diphosphate. The enzyme catalyses isopentenyl diphosphate + (2E)-geranyl diphosphate = (2E,6E)-farnesyl diphosphate + diphosphate. Its pathway is isoprenoid biosynthesis; farnesyl diphosphate biosynthesis; farnesyl diphosphate from geranyl diphosphate and isopentenyl diphosphate: step 1/1. It functions in the pathway isoprenoid biosynthesis; geranyl diphosphate biosynthesis; geranyl diphosphate from dimethylallyl diphosphate and isopentenyl diphosphate: step 1/1. Its function is as follows. Catalyzes the sequential condensation of isopentenyl pyrophosphate with the allylic pyrophosphates, dimethylallyl pyrophosphate, and then with the resultant geranylpyrophosphate to the ultimate product farnesyl pyrophosphate. The sequence is that of Farnesyl pyrophosphate synthase (FPS) from Zea mays (Maize).